We begin with the raw amino-acid sequence, 186 residues long: Inner membrane-spanning protein YciB (186 aa).

Transmembrane regions (helical) follow at residues 3–23, 24–44, 49–69, 76–96, 121–141, and 149–169; these read FLFD…AGIY, VATT…WFKH, AMQW…LIFH, WKPT…AVLL, LVWS…AYHF, and FKLF…SVWL.

It belongs to the YciB family.

It is found in the cell inner membrane. Its function is as follows. Plays a role in cell envelope biogenesis, maintenance of cell envelope integrity and membrane homeostasis. This chain is Inner membrane-spanning protein YciB, found in Ralstonia nicotianae (strain ATCC BAA-1114 / GMI1000) (Ralstonia solanacearum).